The following is a 226-amino-acid chain: Transmembrane gamma-carboxyglutamic acid protein 4 (226 aa).

The first 17 residues, 1 to 17 (MFPLLIVLSQLPRLTLA), serve as a signal peptide directing secretion. Residues 18–49 (VPHCIRSLKDSEHAPEEVFASKEAANIFMHRR) constitute a propeptide that is removed on maturation. Residues 50 to 113 (LLNNRFDLEL…GSDVNKEKID (64 aa)) are Extracellular-facing. Positions 52–98 (NNRFDLELFTPGDLERECYEEFCSYEEAREILGDDENTIKFWQTYSI) constitute a Gla domain. A disulfide bridge links Cys-69 with Cys-74. At Glu-72 the chain carries 4-carboxyglutamate. Residues 114–134 (VMSLLTGLIVAGVFLVIFGLV) traverse the membrane as a helical segment. Over 135 to 226 (GYYVCLTKCK…FKKSMSLPSH (92 aa)) the chain is Cytoplasmic. Ser-164 carries the post-translational modification Phosphoserine. Positions 186-189 (LPSY) match the LPXY motif; mediates binding to WW domain-containing proteins motif. The PPXY motif; mediates binding to WW domain-containing proteins motif lies at 204 to 207 (PPPY).

It belongs to the commissureless family. Interacts (via cytoplasmic domain) with WW domain-containing proteins MAGI1, MAGI3, NEDD4, NEDD4L, WWTR1/TAZ and YAP1. Post-translationally, gamma-carboxyglutamate residues are formed by vitamin K dependent carboxylation. These residues are essential for the binding of calcium.

The protein resides in the endoplasmic reticulum-Golgi intermediate compartment membrane. The protein localises to the cell membrane. Functionally, may control axon guidance across the CNS. Prevents the delivery of ROBO1 at the cell surface and down-regulates its expression. This is Transmembrane gamma-carboxyglutamic acid protein 4 (Prrg4) from Mus musculus (Mouse).